We begin with the raw amino-acid sequence, 440 residues long: Oligodendrocyte-myelin glycoprotein (440 aa).

The signal sequence occupies residues 1–24 (MEYQILKMSLCLFILLFLTPGILC). The region spanning 25–55 (ICPLQCICTERHRHVDCSGRNLSTLPSGLQE) is the LRRNT domain. Residues Asn-45 and Asn-61 are each glycosylated (N-linked (GlcNAc...) asparagine). 8 LRR repeats span residues 56-77 (NIIH…LTQY), 79-100 (NLRT…LPRS), 101-121 (LWNM…DTAY), 124-145 (NLKY…KNTL), 147-168 (SLEV…MPSK), 169-189 (LHIV…TLIN), 192-213 (NLTH…SFDQ), and 216-239 (QLQE…TYLL). Asn-103 carries an N-linked (GlcNAc...) asparagine glycan. N-linked (GlcNAc...) asparagine glycans are attached at residues Asn-152, Asn-176, Asn-189, Asn-192, and Asn-234. 5 Ser/Thr-rich repeats span residues 229–270 (CDHK…YPTP), 271–292 (SGFT…INSL), 293–335 (SVVT…VPYP), 336–377 (EDTS…SPTP), and 378–416 (MTLS…TPLP). Residues Asn-364 and Asn-389 are each glycosylated (N-linked (GlcNAc...) asparagine). A lipid anchor (GPI-anchor amidated serine) is attached at Ser-417. A propeptide spans 418 to 440 (VANAWKVNASFLLLLNVVVMLAV) (removed in mature form). N-linked (GlcNAc...) asparagine glycosylation occurs at Asn-425.

As to quaternary structure, binds to RTN4R. In terms of processing, O-glycosylated in its Ser/Thr-rich repeat domain. In terms of tissue distribution, oligodendrocytes and myelin of the central nervous system.

The protein resides in the cell membrane. Functionally, cell adhesion molecule contributing to the interactive process required for myelination in the central nervous system. In Homo sapiens (Human), this protein is Oligodendrocyte-myelin glycoprotein (OMG).